A 146-amino-acid chain; its full sequence is uncharacterized protein (146 aa).

Residues Asp-67–Val-93 are disordered. Over residues Ser-77 to Pro-92 the composition is skewed to low complexity.

This is an uncharacterized protein from Caenorhabditis elegans.